Consider the following 201-residue polypeptide: MVYSVGLTGNIASGKSTVAEFFSELGINVIYADKIAKELTSKDTPCYQDIILHFGSSVVLNNGELDRKHIRDIIFSNSNERLWLESLLHPVIRKKIEEQLIVCTSPYCLIEIPLLFNKHHYPYLQKVLLVIAPLESQLDRIVKRDHCTKKQALAILATQPNLEQRLEAADDVLINESGLSELKAKVNKLHQKYLREAKIKQ.

The DPCK domain occupies 4-201; that stretch reads SVGLTGNIAS…KYLREAKIKQ (198 aa). ATP is bound at residue 12–17; it reads ASGKST.

The protein belongs to the CoaE family.

Its subcellular location is the cytoplasm. The catalysed reaction is 3'-dephospho-CoA + ATP = ADP + CoA + H(+). It participates in cofactor biosynthesis; coenzyme A biosynthesis; CoA from (R)-pantothenate: step 5/5. Catalyzes the phosphorylation of the 3'-hydroxyl group of dephosphocoenzyme A to form coenzyme A. The chain is Dephospho-CoA kinase from Legionella pneumophila (strain Lens).